The following is a 246-amino-acid chain: Small ribosomal subunit protein uS2 (246 aa).

Belongs to the universal ribosomal protein uS2 family.

This chain is Small ribosomal subunit protein uS2, found in Dictyoglomus thermophilum (strain ATCC 35947 / DSM 3960 / H-6-12).